A 161-amino-acid chain; its full sequence is TRAF-interacting protein with FHA domain-containing protein B (161 aa).

The FHA domain maps to 36–91; it reads LLLGRGQDAHLQLQLPRLSRRHLSLEPYLEKGSALLAFCLKALSRKGCVWVNGLTL.

Interacts with TIFA.

Inhibits TIFA-mediated TRAF6 activation possibly by inducing a conformational change in TIFA. This Homo sapiens (Human) protein is TRAF-interacting protein with FHA domain-containing protein B.